The following is a 642-amino-acid chain: Core protein VP4 (642 aa).

The protein belongs to the orbivirus VP4 family.

It is found in the virion. Functionally, the VP4 protein is one of the five proteins (with VP1, VP3, VP6 and VP7) which form the inner capsid of the virus. The protein is Core protein VP4 (Segment-4) of African horse sickness virus (AHSV).